Here is a 274-residue protein sequence, read N- to C-terminus: tRNA-cytidine(32) 2-sulfurtransferase (274 aa).

A PP-loop motif motif is present at residues 40–45 (SGGKDS). 3 residues coordinate [4Fe-4S] cluster: cysteine 115, cysteine 118, and cysteine 206.

Belongs to the TtcA family. As to quaternary structure, homodimer. Mg(2+) is required as a cofactor. It depends on [4Fe-4S] cluster as a cofactor.

It localises to the cytoplasm. The enzyme catalyses cytidine(32) in tRNA + S-sulfanyl-L-cysteinyl-[cysteine desulfurase] + AH2 + ATP = 2-thiocytidine(32) in tRNA + L-cysteinyl-[cysteine desulfurase] + A + AMP + diphosphate + H(+). It participates in tRNA modification. Catalyzes the ATP-dependent 2-thiolation of cytidine in position 32 of tRNA, to form 2-thiocytidine (s(2)C32). The sulfur atoms are provided by the cysteine/cysteine desulfurase (IscS) system. The sequence is that of tRNA-cytidine(32) 2-sulfurtransferase from Pseudomonas aeruginosa (strain LESB58).